A 327-amino-acid chain; its full sequence is tRNA(Ile)-lysidine synthase (327 aa).

Position 32 to 37 (32 to 37 (SGGQDS)) interacts with ATP.

The protein belongs to the tRNA(Ile)-lysidine synthase family.

The protein localises to the cytoplasm. It carries out the reaction cytidine(34) in tRNA(Ile2) + L-lysine + ATP = lysidine(34) in tRNA(Ile2) + AMP + diphosphate + H(+). In terms of biological role, ligates lysine onto the cytidine present at position 34 of the AUA codon-specific tRNA(Ile) that contains the anticodon CAU, in an ATP-dependent manner. Cytidine is converted to lysidine, thus changing the amino acid specificity of the tRNA from methionine to isoleucine. The protein is tRNA(Ile)-lysidine synthase of Synechococcus sp. (strain JA-2-3B'a(2-13)) (Cyanobacteria bacterium Yellowstone B-Prime).